The chain runs to 302 residues: Proline dehydrogenase 1 (302 aa).

Lys95 provides a ligand contact to substrate. Asp129 is a catalytic residue. Met130 and Gln158 together coordinate FAD. The active site involves Arg179. Residues 182-184 and 221-222 each bind FAD; these read KGA and TH. 283–284 serves as a coordination point for substrate; it reads RR.

Belongs to the proline oxidase family. It depends on FAD as a cofactor.

The catalysed reaction is L-proline + a quinone = (S)-1-pyrroline-5-carboxylate + a quinol + H(+). The protein operates within amino-acid degradation; L-proline degradation into L-glutamate; L-glutamate from L-proline: step 1/2. Its function is as follows. Converts proline to delta-1-pyrroline-5-carboxylate. This is Proline dehydrogenase 1 (fadM) from Bacillus subtilis subsp. natto.